Reading from the N-terminus, the 188-residue chain is Elongation factor P (188 aa).

Belongs to the elongation factor P family.

It localises to the cytoplasm. It functions in the pathway protein biosynthesis; polypeptide chain elongation. In terms of biological role, involved in peptide bond synthesis. Stimulates efficient translation and peptide-bond synthesis on native or reconstituted 70S ribosomes in vitro. Probably functions indirectly by altering the affinity of the ribosome for aminoacyl-tRNA, thus increasing their reactivity as acceptors for peptidyl transferase. This Mycoplasmoides gallisepticum (strain R(low / passage 15 / clone 2)) (Mycoplasma gallisepticum) protein is Elongation factor P.